The chain runs to 289 residues: MSIQAKKLNYTYQIGTPLEHIALKDVSINIKDGSYTAIVGHTGSGKSTLLQHLNGLLKPTSGEISINGYTIDNTTKNKELGKLRKEVGFVFQFPEAQLFEETVLKDIAFAPKNFGKSEDEAEKIAREKAKLVALPEEVLEKSPFELSGGQMRRVAIAGILAMEPKVLVLDEPTAGLDPEGRHQMMEMFNRLHKDENLTIILVTHQMNDVAEYADHVIVLESGKVIADSTPKELFSDPEWLKNHHLNLPQTTDFAYKLFDKLALSKHSLPLKSEELTDEILKILGGNLNE.

The 244-residue stretch at 3–246 (IQAKKLNYTY…PEWLKNHHLN (244 aa)) folds into the ABC transporter domain. Position 40–47 (40–47 (GHTGSGKS)) interacts with ATP.

It belongs to the ABC transporter superfamily. Energy-coupling factor EcfA family. Forms a stable energy-coupling factor (ECF) transporter complex composed of 2 membrane-embedded substrate-binding proteins (S component), 2 ATP-binding proteins (A component) and 2 transmembrane proteins (T component).

It localises to the cell membrane. Its function is as follows. ATP-binding (A) component of a common energy-coupling factor (ECF) ABC-transporter complex. Unlike classic ABC transporters this ECF transporter provides the energy necessary to transport a number of different substrates. This is Energy-coupling factor transporter ATP-binding protein EcfA2 from Ligilactobacillus salivarius (strain UCC118) (Lactobacillus salivarius).